Reading from the N-terminus, the 64-residue chain is Ferredoxin-like protein in nif region (64 aa).

The 29-residue stretch at 2 to 30 folds into the 4Fe-4S ferredoxin-type domain; the sequence is AFKIIASQCTQCGACEFECPSGAISFKTD. Positions 10, 13, 16, 20, 39, 42, 51, and 55 each coordinate [4Fe-4S] cluster.

It depends on [4Fe-4S] cluster as a cofactor.

The chain is Ferredoxin-like protein in nif region (fdxN) from Rhizobium leguminosarum bv. trifolii.